The primary structure comprises 240 residues: Adapter protein MecA (240 aa).

Belongs to the MecA family. In terms of assembly, homodimer.

Functionally, enables the recognition and targeting of unfolded and aggregated proteins to the ClpC protease or to other proteins involved in proteolysis. The sequence is that of Adapter protein MecA from Streptococcus mutans serotype c (strain ATCC 700610 / UA159).